The following is a 531-amino-acid chain: Bifunctional aspartate aminotransferase and L-aspartate beta-decarboxylase (531 aa).

Residues G114 and N255 each contribute to the L-aspartate site. N6-(pyridoxal phosphate)lysine is present on K314. R496 serves as a coordination point for L-aspartate.

It belongs to the class-I pyridoxal-phosphate-dependent aminotransferase family. Homododecamer. Pyridoxal 5'-phosphate is required as a cofactor.

The enzyme catalyses L-aspartate + H(+) = L-alanine + CO2. It carries out the reaction L-aspartate + 2-oxoglutarate = oxaloacetate + L-glutamate. Its activity is regulated as follows. Inhibited by 10 mM Co(2+), Mn(2+) and Ni(2+), and by 1 mM Cu(2+) and Hg(2+). Its function is as follows. Bifunctional enzyme that has both L-aspartate decarboxylase and transaminase activity. Has high activity with L-aspartate, and much lower activity with D-aspartate, L-lysine and L-glutamine. This is Bifunctional aspartate aminotransferase and L-aspartate beta-decarboxylase from Pseudomonas sp.